Reading from the N-terminus, the 541-residue chain is Chaperonin GroEL 2 (541 aa).

ATP is bound by residues 29-32 (TLGP), 86-90 (DGTTT), Gly413, 476-478 (NAA), and Asp492.

This sequence belongs to the chaperonin (HSP60) family. In terms of assembly, forms a cylinder of 14 subunits composed of two heptameric rings stacked back-to-back. Interacts with the co-chaperonin GroES.

Its subcellular location is the cytoplasm. It catalyses the reaction ATP + H2O + a folded polypeptide = ADP + phosphate + an unfolded polypeptide.. Its function is as follows. Together with its co-chaperonin GroES, plays an essential role in assisting protein folding. The GroEL-GroES system forms a nano-cage that allows encapsulation of the non-native substrate proteins and provides a physical environment optimized to promote and accelerate protein folding. This Streptomyces avermitilis (strain ATCC 31267 / DSM 46492 / JCM 5070 / NBRC 14893 / NCIMB 12804 / NRRL 8165 / MA-4680) protein is Chaperonin GroEL 2.